A 385-amino-acid polypeptide reads, in one-letter code: Probable thioesterase PNKD (385 aa).

Residues 32–58 (KASHNRTRALQSHSSPEGKEEPEPLSP) form a disordered region. Zn(2+)-binding residues include His172, His174, Asp176, His177, His229, Asp253, and His291.

It belongs to the metallo-beta-lactamase superfamily. Glyoxalase II family. Isoform 2 interacts with the sarcomeric proteins, MRLC2, MYOM1 and ENO3. Zn(2+) is required as a cofactor. Undergoes cleavage at the N-terminus. As to expression, isoform 1 is only expressed in the brain. Isoform 2 is ubiquitously detected with highest expression in skeletal muscle and detected in myocardial myofibrils.

The protein localises to the cell membrane. It localises to the mitochondrion. It is found in the cytoplasm. Its subcellular location is the golgi apparatus. The protein resides in the endoplasmic reticulum. The enzyme catalyses a thioester + H2O = a thiol + a carboxylate + H(+). In terms of biological role, probable thioesterase that may play a role in cellular detoxification processes; it likely acts on a yet-unknown alpha-hydroxythioester substrate. In vitro, it is able to catalyze the hydrolysis of S-D-lactoyl-glutathione to form glutathione and D-lactic acid at very low rate, though this reaction is not physiologically relevant in vivo. The sequence is that of Probable thioesterase PNKD (PNKD) from Homo sapiens (Human).